Reading from the N-terminus, the 43-residue chain is Structural protein ORF5a (43 aa).

The chain crosses the membrane as a helical span at residues 2-22; it reads FSQIGAFLDSALLLLVAFFAV.

This sequence belongs to the arteriviridae ORF5a protein family. Interacts with proteins GP2B and GP4.

It localises to the virion. It is found in the host cell membrane. Its function is as follows. Minor virion component that plays an essential role in virus infectivity. This is Structural protein ORF5a from Sus scrofa (Pig).